The primary structure comprises 716 residues: Cyclic nucleotide-gated ion channel 1 (716 aa).

The Cytoplasmic segment spans residues 1–97 (MNFRQEKFVR…QGPFLQRWNK (97 aa)). A helical transmembrane segment spans residues 98–118 (IFVLACIIAVSLDPLFFYVPI). At 119 to 132 (IDDAKKCLGIDKKM) the chain is on the extracellular side. The helical transmembrane segment at 133 to 153 (EITASVLRSFTDVFYVLHIIF) threads the bilayer. Residues 154 to 187 (QFRTGFIAPSSRVFGRGVLVEDKREIAKRYLSSH) are Cytoplasmic-facing. Residues 188-208 (FIIDILAVLPLPQMVILIIIP) traverse the membrane as a helical segment. Over 209–220 (HMRGSSSLNTKN) the chain is Extracellular. Residues 221–241 (MLKFIVFFQYIPRFIRIYPLY) form a helical membrane-spanning segment. Residues 242–259 (KEVTRTSGILTETAWAGA) lie on the Cytoplasmic side of the membrane. The chain crosses the membrane as a helical span at residues 260–280 (AFNLFLYMLASHVFGAFWYLF). Over 281 to 379 (SIERETVCWK…GQNLKTSTYI (99 aa)) the chain is Extracellular. A helical membrane pass occupies residues 380-400 (WEICFAVFISIAGLVLFSFLI). The Cytoplasmic portion of the chain corresponds to 401 to 716 (GNMQTYLQST…PAEPDFNSDD (316 aa)). Residues 486–610 (MFEK…SKQL) and Glu-557 each bind a nucleoside 3',5'-cyclic phosphate. Residues 602–617 (FRRLHSKQLRHTFRYY) form a calmodulin-binding region. The 30-residue stretch at 622–651 (KTWAACFIQAAWRRYIKKKLEESLKEEENR) folds into the IQ domain. The tract at residues 689-716 (SVRKPRMPERMPPMLLQKPAEPDFNSDD) is disordered.

It belongs to the cyclic nucleotide-gated cation channel (TC 1.A.1.5) family. In terms of assembly, homotetramer or heterotetramer (Potential). Binds calmodulin-2/3/5 with a higher affinity than calmodulin-1/4. In terms of tissue distribution, expressed in the whole plant but only weakly in roots.

It localises to the cell membrane. Its function is as follows. Acts as a cyclic nucleotide-gated ion channel. Can be activated by cyclic AMP which leads to an opening of the cation channel. May be responsible for cAMP-induced calcium entry in cells and thus should be involved in the calcium signal transduction. Could transport K(+), Na(+) and Pb(2+). The polypeptide is Cyclic nucleotide-gated ion channel 1 (CNGC1) (Arabidopsis thaliana (Mouse-ear cress)).